The chain runs to 240 residues: UPF0502 protein Veis_2102 (240 aa).

It belongs to the UPF0502 family.

The chain is UPF0502 protein Veis_2102 from Verminephrobacter eiseniae (strain EF01-2).